The following is a 356-amino-acid chain: uncharacterized protein (356 aa).

This is an uncharacterized protein from Acanthamoeba polyphaga (Amoeba).